Consider the following 221-residue polypeptide: Histone H1.3 (221 aa).

Positions 1–17 are enriched in low complexity; sequence MSETAPLAPTIPAPAEK. The tract at residues 1-43 is disordered; the sequence is MSETAPLAPTIPAPAEKTPVKKKAKKAGATAGKRKASGPPVSE. N-acetylserine is present on S2. S2 carries the phosphoserine modification. Residue K17 is modified to N6-acetyllysine. The residue at position 18 (T18) is a Phosphothreonine. Residues 20-36 are compositionally biased toward basic residues; sequence VKKKAKKAGATAGKRKA. 3 positions are modified to N6-(beta-hydroxybutyryl)lysine: K35, K47, and K53. In terms of domain architecture, H15 spans 37–110; that stretch reads SGPPVSELIT…GASGSFKLNK (74 aa). R55 carries the citrulline modification. 4 positions are modified to N6-(beta-hydroxybutyryl)lysine: K65, K76, K86, and K91. The interval 90-221 is disordered; sequence SKGTLVQTKG…KAKKAAPKKK (132 aa). S105 carries the phosphoserine; by PKC modification. An N6-(beta-hydroxybutyryl)lysine modification is found at K107. 3 stretches are compositionally biased toward basic residues: residues 120-141, 150-161, and 170-179; these read KAKK…KPKK, KSIKKTPKKVKK, and KVAKSAKKVK. The residue at position 170 (K170) is an N6-(beta-hydroxybutyryl)lysine. The segment covering 180–193 has biased composition (low complexity); the sequence is TPQPKKAAKSPAKA. Over residues 194–221 the composition is skewed to basic residues; that stretch reads KAPKPKAAKPKSGKPKVTKAKKAAPKKK.

Belongs to the histone H1/H5 family. Post-translationally, H1 histones are progressively phosphorylated during the cell cycle, becoming maximally phosphorylated during late G2 phase and M phase, and being dephosphorylated sharply thereafter. In terms of processing, citrullination at Arg-55 (H1R54ci) by PADI4 takes place within the DNA-binding site of H1 and results in its displacement from chromatin and global chromatin decondensation, thereby promoting pluripotency and stem cell maintenance.

It localises to the nucleus. Its subcellular location is the chromosome. Functionally, histone H1 protein binds to linker DNA between nucleosomes forming the macromolecular structure known as the chromatin fiber. Histones H1 are necessary for the condensation of nucleosome chains into higher-order structured fibers. Also acts as a regulator of individual gene transcription through chromatin remodeling, nucleosome spacing and DNA methylation. The polypeptide is Histone H1.3 (Homo sapiens (Human)).